Here is a 355-residue protein sequence, read N- to C-terminus: Histidinol-phosphate aminotransferase (355 aa).

Position 218 is an N6-(pyridoxal phosphate)lysine (Lys218).

This sequence belongs to the class-II pyridoxal-phosphate-dependent aminotransferase family. Histidinol-phosphate aminotransferase subfamily. In terms of assembly, homodimer. The cofactor is pyridoxal 5'-phosphate.

It catalyses the reaction L-histidinol phosphate + 2-oxoglutarate = 3-(imidazol-4-yl)-2-oxopropyl phosphate + L-glutamate. It functions in the pathway amino-acid biosynthesis; L-histidine biosynthesis; L-histidine from 5-phospho-alpha-D-ribose 1-diphosphate: step 7/9. The protein is Histidinol-phosphate aminotransferase of Pelodictyon phaeoclathratiforme (strain DSM 5477 / BU-1).